The primary structure comprises 263 residues: Aquaporin Lacbi1:247946 (263 aa).

At M1–E18 the chain is on the cytoplasmic side. A helical transmembrane segment spans residues F19–S39. Residues T40 to F45 are Extracellular-facing. A helical transmembrane segment spans residues L46–I66. The Cytoplasmic portion of the chain corresponds to S67–E89. Positions N72–A74 match the NPA 1 motif. Residues V90 to A110 traverse the membrane as a helical segment. At N111–Q143 the chain is on the extracellular side. Residues A144–L164 traverse the membrane as a helical segment. At N165–N169 the chain is on the cytoplasmic side. The chain crosses the membrane as a helical span at residues G170–A190. The Extracellular portion of the chain corresponds to S191 to Q227. Positions N201 to A203 match the NPA 2 motif. Residues Y228–Y248 form a helical membrane-spanning segment. Residues D249–R263 lie on the Cytoplasmic side of the membrane.

It belongs to the MIP/aquaporin (TC 1.A.8) family.

The protein resides in the membrane. The enzyme catalyses H2O(in) = H2O(out). Functionally, water channel required to facilitate the transport of water across membranes. Shows low but significant water conductivity, but no glycerol nor ammonium transport activities. This chain is Aquaporin Lacbi1:247946, found in Laccaria bicolor (strain S238N-H82 / ATCC MYA-4686) (Bicoloured deceiver).